A 229-amino-acid polypeptide reads, in one-letter code: Flagellar L-ring protein (229 aa).

An N-terminal signal peptide occupies residues 1–25; it reads MKQVRLLPPAPVRAVCALAVAALAG. Residue cysteine 26 is the site of N-palmitoyl cysteine attachment. A lipid anchor (S-diacylglycerol cysteine) is attached at cysteine 26.

The protein belongs to the FlgH family. As to quaternary structure, the basal body constitutes a major portion of the flagellar organelle and consists of four rings (L,P,S, and M) mounted on a central rod.

The protein resides in the cell outer membrane. The protein localises to the bacterial flagellum basal body. In terms of biological role, assembles around the rod to form the L-ring and probably protects the motor/basal body from shearing forces during rotation. In Burkholderia ambifaria (strain ATCC BAA-244 / DSM 16087 / CCUG 44356 / LMG 19182 / AMMD) (Burkholderia cepacia (strain AMMD)), this protein is Flagellar L-ring protein.